The chain runs to 692 residues: Elongation factor G (692 aa).

One can recognise a tr-type G domain in the interval 9–284; that stretch reads HKVRNIGIAA…AVVDYLPAPD (276 aa). GTP-binding positions include 18-25, 82-86, and 136-139; these read AHIDAGKT, DTPGH, and NKMD.

This sequence belongs to the TRAFAC class translation factor GTPase superfamily. Classic translation factor GTPase family. EF-G/EF-2 subfamily.

The protein localises to the cytoplasm. In terms of biological role, catalyzes the GTP-dependent ribosomal translocation step during translation elongation. During this step, the ribosome changes from the pre-translocational (PRE) to the post-translocational (POST) state as the newly formed A-site-bound peptidyl-tRNA and P-site-bound deacylated tRNA move to the P and E sites, respectively. Catalyzes the coordinated movement of the two tRNA molecules, the mRNA and conformational changes in the ribosome. The chain is Elongation factor G from Campylobacter concisus (strain 13826).